Consider the following 97-residue polypeptide: MSIRPLHDRVIVKRKEVESKSAGGIVLTGSAAGKSTRGEVVAVGKGRVLENGNVQPLDVKVGDIVIFNDGYGVKAEKIDNEEVLIMSESDILAIVEA.

The protein belongs to the GroES chaperonin family. Heptamer of 7 subunits arranged in a ring. Interacts with the chaperonin GroEL.

It localises to the cytoplasm. Together with the chaperonin GroEL, plays an essential role in assisting protein folding. The GroEL-GroES system forms a nano-cage that allows encapsulation of the non-native substrate proteins and provides a physical environment optimized to promote and accelerate protein folding. GroES binds to the apical surface of the GroEL ring, thereby capping the opening of the GroEL channel. The chain is Co-chaperonin GroES from Serratia proteamaculans (strain 568).